The following is a 575-amino-acid chain: Arginine--tRNA ligase (575 aa).

The 'HIGH' region signature appears at Ala130–His140.

Belongs to the class-I aminoacyl-tRNA synthetase family. In terms of assembly, monomer.

The protein localises to the cytoplasm. It carries out the reaction tRNA(Arg) + L-arginine + ATP = L-arginyl-tRNA(Arg) + AMP + diphosphate. This is Arginine--tRNA ligase from Magnetococcus marinus (strain ATCC BAA-1437 / JCM 17883 / MC-1).